A 96-amino-acid chain; its full sequence is Small ribosomal subunit protein bS6 (96 aa).

The protein belongs to the bacterial ribosomal protein bS6 family.

Binds together with bS18 to 16S ribosomal RNA. This is Small ribosomal subunit protein bS6 from Bacillus thuringiensis subsp. konkukian (strain 97-27).